The primary structure comprises 220 residues: Elongation factor Ts, chloroplastic (220 aa).

This sequence belongs to the EF-Ts family.

It localises to the plastid. It is found in the chloroplast. Functionally, associates with the EF-Tu.GDP complex and induces the exchange of GDP to GTP. It remains bound to the aminoacyl-tRNA.EF-Tu.GTP complex up to the GTP hydrolysis stage on the ribosome. The chain is Elongation factor Ts, chloroplastic (tsf) from Pyropia yezoensis (Susabi-nori).